The sequence spans 263 residues: Small ribosomal subunit protein eS4 (263 aa).

Positions 42-104 constitute an S4 RNA-binding domain; it reads LPLIIFLRNR…TGEHFRLVYD (63 aa).

The protein belongs to the eukaryotic ribosomal protein eS4 family.

This is Small ribosomal subunit protein eS4 (RPS4) from Gallus gallus (Chicken).